The primary structure comprises 141 residues: ATP synthase epsilon chain (141 aa).

Belongs to the ATPase epsilon chain family. As to quaternary structure, F-type ATPases have 2 components, CF(1) - the catalytic core - and CF(0) - the membrane proton channel. CF(1) has five subunits: alpha(3), beta(3), gamma(1), delta(1), epsilon(1). CF(0) has three main subunits: a, b and c.

It is found in the cell inner membrane. Functionally, produces ATP from ADP in the presence of a proton gradient across the membrane. The polypeptide is ATP synthase epsilon chain (Azoarcus sp. (strain BH72)).